A 1891-amino-acid chain; its full sequence is Transcription initiation factor TFIID subunit 1 (1891 aa).

3 disordered regions span residues 1–34 (MGPGWAGLLQDKGGGSPSVVMSDTDSDEESAGGG), 154–180 (KLMPPPPPPPGPLKKEKDQDDITGVSE), and 197–224 (ASEKVDFSSSSDSESEMGPQDAAQSESK). Residues 1-435 (MGPGWAGLLQ…VTQLHWEDDI (435 aa)) enclose the Protein kinase 1 domain. Residues 156-165 (MPPPPPPPGP) show a composition bias toward pro residues. Positions 197–208 (ASEKVDFSSSSD) are enriched in low complexity. Ser328 bears the Phosphoserine; by autocatalysis mark. The segment at 535 to 556 (PDEKEEATSNSPSKENKKESSL) is disordered. Residues 538–997 (KEEATSNSPS…KIPNKPTQQK (460 aa)) form a histone acetyltransferase (HAT) region. Position 565 is an N6-acetyllysine (Lys565). Residues Lys570 and Lys583 each participate in a glycyl lysine isopeptide (Lys-Gly) (interchain with G-Cter in SUMO2) cross-link. 3 disordered regions span residues 990–1009 (PNKPTQQKDDKEPQPVKKTV), 1128–1148 (MLQNKKTSSQLSREREEQERK), and 1254–1278 (RLKRNQEKEKLKGPPEKKPKKMKER). Composition is skewed to basic and acidic residues over residues 995–1004 (QQKDDKEPQP), 1139–1148 (SREREEQERK), and 1254–1270 (RLKRNQEKEKLKGPPEK). The HMG box DNA-binding region spans 1216–1294 (VRIRTTKDEE…CGACGAIGHM (79 aa)). An interaction with ASF1A and ASF1B region spans residues 1363–1650 (VLKFPKQQLP…TAKEAALEEA (288 aa)). The short motif at 1372–1379 (PPKKKRRV) is the Nuclear localization signal element. 2 consecutive Bromo domains span residues 1397–1505 (RRRT…LKEK) and 1519–1628 (LLDD…LTEY). Residues 1446–1891 (MDLQTLRENV…AGDTDLDSDE (446 aa)) enclose the Protein kinase 2 domain. 2 disordered regions span residues 1651-1676 (ELESLDPMTPGPYTPQPPDLYDNNTS) and 1690-1891 (SNLS…DSDE). A compositionally biased stretch (pro residues) spans 1659-1668 (TPGPYTPQPP). A phosphoserine mark is found at Ser1690 and Ser1693. Over residues 1690–1708 (SNLSVLDIPSATSEKQLTQ) the composition is skewed to polar residues. Composition is skewed to acidic residues over residues 1711 to 1723 (GDGDGDLADEEEG) and 1741 to 1756 (EGEDDEEDAGSDEEGD). Positions 1764 to 1778 (LSESGSDSDVESGSL) are enriched in low complexity. 3 positions are modified to phosphoserine: Ser1799, Ser1802, and Ser1820. Residues 1830–1840 (KSNTQDTSFSS) are compositionally biased toward polar residues. Residues 1846–1855 (VSEEEEDEEE) are compositionally biased toward acidic residues. Ser1847 is modified (phosphoserine). Residues 1858–1867 (SGPSVLSQVH) show a composition bias toward polar residues.

The protein belongs to the TAF1 family. As to quaternary structure, component of the TFIID basal transcription factor complex, composed of TATA-box-binding protein TBP, and a number of TBP-associated factors (TAFs). TFIID consists of at least TBP, TAF1, TAF2, TAF3, TAF4, TAF5, TAF6, TAF7, TAF8, TAF9, TAF10, TAF11, TAF12 and TAF13. Interacts with TAF7; the interaction is direct. TAF1, when part of the TFIID complex, interacts with C-terminus of TP53. Part of a TFIID-containing RNA polymerase II pre-initiation complex that is composed of TBP and at least GTF2A1, GTF2A2, GTF2E1, GTF2E2, GTF2F1, GTF2H2, GTF2H3, GTF2H4, GTF2H5, GTF2B, TCEA1, ERCC2, ERCC3, TAF1, TAF2, TAF3, TAF4, TAF5, TAF6, TAF7, TAF8, TAF9, TAF10, TAF11, TAF12 and TAF13. Component of some MLL1/MLL complex, at least composed of the core components KMT2A/MLL1, ASH2L, HCFC1/HCF1, WDR5 and RBBP5, as well as the facultative components BACC1, CHD8, E2F6, HSP70, INO80C, KANSL1, LAS1L, MAX, MCRS1, MGA, KAT8/MOF, PELP1, PHF20, PRP31, RING2, RUVB1/TIP49A, RUVB2/TIP49B, SENP3, TAF1, TAF4, TAF6, TAF7, TAF9 and TEX10. RB1 interacts with the N-terminal domain of TAF1. Interacts with ASF1A and ASF1B. Interacts (via bromo domains) with acetylated lysine residues on the N-terminus of histone H1.4, H2A, H2B, H3 and H4 (in vitro). It depends on Mg(2+) as a cofactor. Phosphorylated by casein kinase II in vitro.

The protein resides in the nucleus. The enzyme catalyses L-seryl-[protein] + ATP = O-phospho-L-seryl-[protein] + ADP + H(+). It catalyses the reaction L-threonyl-[protein] + ATP = O-phospho-L-threonyl-[protein] + ADP + H(+). The catalysed reaction is L-lysyl-[protein] + acetyl-CoA = N(6)-acetyl-L-lysyl-[protein] + CoA + H(+). Its activity is regulated as follows. Autophosphorylates on Ser residues. Inhibited by retinoblastoma tumor suppressor protein, RB1. Binding to TAF1 or CIITA inhibits the histone acetyltransferase activity. In terms of biological role, the TFIID basal transcription factor complex plays a major role in the initiation of RNA polymerase II (Pol II)-dependent transcription. TFIID recognizes and binds promoters with or without a TATA box via its subunit TBP, a TATA-box-binding protein, and promotes assembly of the pre-initiation complex (PIC). The TFIID complex consists of TBP and TBP-associated factors (TAFs), including TAF1, TAF2, TAF3, TAF4, TAF5, TAF6, TAF7, TAF8, TAF9, TAF10, TAF11, TAF12 and TAF13. TAF1 is the largest component and core scaffold of the TFIID complex, involved in nucleating complex assembly. TAF1 forms a promoter DNA binding subcomplex of TFIID, together with TAF7 and TAF2. Contains novel N- and C-terminal Ser/Thr kinase domains which can autophosphorylate or transphosphorylate other transcription factors. Phosphorylates TP53 on 'Thr-55' which leads to MDM2-mediated degradation of TP53. Phosphorylates GTF2A1 and GTF2F1 on Ser residues. Possesses DNA-binding activity. Exhibits histone acetyltransferase activity towards histones H3 and H4. Essential for progression of the G1 phase of the cell cycle. This Mus musculus (Mouse) protein is Transcription initiation factor TFIID subunit 1.